Here is a 361-residue protein sequence, read N- to C-terminus: Velvet complex subunit B (361 aa).

The 336-residue stretch at 1–336 (MIVRTEDQKL…GNQGQKLPLR (336 aa)) folds into the Velvet domain. 2 disordered regions span residues 42 to 222 (PSST…NNIP) and 327 to 361 (GNQG…EDDS). Low complexity-rich tracts occupy residues 57-74 (PSAS…SRPP) and 93-107 (PPSS…SQSQ). Over residues 108–127 (DNLTPSSPYPPHSNSEQPQT) the composition is skewed to polar residues. The span at 130–147 (YPPPPPIDRAAPFPPPVL) shows a compositional bias: pro residues. Composition is skewed to polar residues over residues 149–168 (SIQS…NNDD), 181–196 (GYTN…YGSG), and 212–222 (SGNATPQNNIP). The segment covering 335–349 (LRNRHGTGSKRRRRN) has biased composition (basic residues).

This sequence belongs to the velvet family. VelB subfamily. As to quaternary structure, component of the heterotrimeric velvet complex composed of laeA, veA and velB; VeA acting as a bridging protein between laeA and velB. Forms a heterodimeric complex with vosA; the formation of the velB-vosA complex is light-dependent.

It is found in the nucleus. It localises to the cytoplasm. In terms of biological role, component of the velvet transcription factor complex that controls sexual/asexual developmental ratio in response to light, promoting sexual development in the darkness while stimulating asexual sporulation under illumination. The velvet complex acts as a global regulator for secondary metabolite gene expression. Component of the velB-VosA heterodimeric complex that plays a dual role in activating genes associated with spore maturation and repressing certain development-associated genes. The velB-VosA complex binds DNA through the DNA-binding domain of vosA that recognizes an 11-nucleotide consensus sequence 5'-CTGGCCGCGGC-3' consisting of two motifs in the promoters of key developmental regulatory genes. This Coprinopsis cinerea (strain Okayama-7 / 130 / ATCC MYA-4618 / FGSC 9003) (Inky cap fungus) protein is Velvet complex subunit B.